The following is a 662-amino-acid chain: Probable quinol oxidase subunit 1 (662 aa).

Helical transmembrane passes span 14–34 (WMII…IAVI) and 56–76 (IGIM…IDAL). His-102 contributes to the Fe(II)-heme a binding site. The next 8 membrane-spanning stretches (helical) occupy residues 103 to 123 (GVIM…NVVI), 140 to 160 (VSFW…IVGG), 187 to 207 (IAIQ…FVTI), 228 to 248 (FITT…LALM), 273 to 293 (FFWV…FGMY), 311 to 331 (MIWA…HHFF), 336 to 356 (GALI…PTGV), and 376 to 396 (MLFS…GVML). His-279, Tyr-283, His-328, and His-329 together coordinate Cu cation. A cross-link (1'-histidyl-3'-tyrosine (His-Tyr)) is located at residues 279-283 (HPEVY). His-414 lines the heme a3 pocket. The next 5 helical transmembrane spans lie at 415-435 (FHYT…IFWY), 451-471 (CFWF…ILGL), 492-512 (FIST…VASI), 587-604 (PVGF…FFLI), and 608-627 (IVPA…WRSF). His-416 is a binding site for Fe(II)-heme a.

This sequence belongs to the heme-copper respiratory oxidase family. The cofactor is Cu cation. Ferriheme a is required as a cofactor. Heme A3. serves as cofactor.

It is found in the cell membrane. The catalysed reaction is 2 a quinol + O2 = 2 a quinone + 2 H2O. It functions in the pathway energy metabolism; oxidative phosphorylation. In terms of biological role, catalyzes quinol oxidation with the concomitant reduction of oxygen to water. The polypeptide is Probable quinol oxidase subunit 1 (qoxB) (Staphylococcus epidermidis (strain ATCC 35984 / DSM 28319 / BCRC 17069 / CCUG 31568 / BM 3577 / RP62A)).